The following is a 338-amino-acid chain: tRNA(Ile)-lysidine synthase (338 aa).

23 to 28 (SGGLDS) is an ATP binding site.

The protein belongs to the tRNA(Ile)-lysidine synthase family.

It is found in the cytoplasm. It carries out the reaction cytidine(34) in tRNA(Ile2) + L-lysine + ATP = lysidine(34) in tRNA(Ile2) + AMP + diphosphate + H(+). Functionally, ligates lysine onto the cytidine present at position 34 of the AUA codon-specific tRNA(Ile) that contains the anticodon CAU, in an ATP-dependent manner. Cytidine is converted to lysidine, thus changing the amino acid specificity of the tRNA from methionine to isoleucine. This is tRNA(Ile)-lysidine synthase from Helicobacter pylori (strain J99 / ATCC 700824) (Campylobacter pylori J99).